The following is a 548-amino-acid chain: Pentatricopeptide repeat-containing protein At5g15300 (548 aa).

PPR repeat units follow at residues 76–110 (DVSICNHVLRGSAQSMKPEKTVSLYTEMEKRGVSP), 111–145 (DRYTFTFVLKACSKLEWRSNGFAFHGKVVRHGFVL), 146–176 (NEYVKNALILFHANCGDLGIASELFDDSAKA), 177–211 (HKVAWSSMTSGYAKRGKIDEAMRLFDEMPYKDQVA), 212–238 (WNVMITGCLKCKEMDSARELFDRFTEK), 239–273 (DVVTWNAMISGYVNCGYPKEALGIFKEMRDAGEHP), 274–308 (DVVTILSLLSACAVLGDLETGKRLHIYILETASVS), 314–348 (GTPIWNALIDMYAKCGSIDRAIEVFRGVKDRDLST), 349–378 (WNTLIVGLALHHAEGSIEMFEEMQRLKVWP), 379–409 (NEVTFIGVILACSHSGRVDEGRKYFSLMRDM), and 415–445 (NIKHYGCMVDMLGRAGQLEEAFMFVESMKIE). The segment at 450 to 525 (VWRTLLGACK…PTGVSLIEED (76 aa)) is type E motif.

Belongs to the PPR family. PCMP-E subfamily.

The polypeptide is Pentatricopeptide repeat-containing protein At5g15300 (PCMP-E40) (Arabidopsis thaliana (Mouse-ear cress)).